Consider the following 2897-residue polypeptide: Chromodomain-helicase-DNA-binding protein 9 (2897 aa).

Residues 173-201 show a composition bias toward polar residues; sequence QCTSLRSQQNRNNLNPGQNSLSQSKNFMN. 3 disordered regions span residues 173-265, 482-525, and 537-671; these read QCTS…CSVS, QRQP…KQEK, and AKER…SAPL. A Glycyl lysine isopeptide (Lys-Gly) (interchain with G-Cter in SUMO2) cross-link involves residue K197. Residues 220–235 show a composition bias toward low complexity; it reads SNSQQSISMQQFSQTS. Composition is skewed to polar residues over residues 247-260 and 484-506; these read HQEG…PNMT and QPPS…TQVR. K499 carries the post-translational modification N6-acetyllysine. Basic and acidic residues predominate over residues 508 to 525; it reads MSEKKQRKKVESESKQEK. A Phosphoserine modification is found at S550. Residues 573-593 are compositionally biased toward basic and acidic residues; the sequence is KPKDKDSKKTKTCSKLKEKTK. K596 is covalently cross-linked (Glycyl lysine isopeptide (Lys-Gly) (interchain with G-Cter in SUMO2)). S611 is modified (phosphoserine). The span at 634–644 shows a compositional bias: basic residues; it reads RRSNRQIKRKK. Basic and acidic residues predominate over residues 645 to 660; the sequence is YAEDIEGKQSEEEVKG. 2 consecutive Chromo domains span residues 690 to 761 and 773 to 839; these read AIVD…HFFA and VEVD…RLDR. Positions 868–872 match the LXXLL motif 1 motif; sequence LNWLL. The 175-residue stretch at 872–1046 folds into the Helicase ATP-binding domain; the sequence is LFNWYNRRNC…FSLLHFLEPL (175 aa). Residue 885–892 coordinates ATP; it reads DEMGLGKT. A DEAH box motif is present at residues 997–1000; the sequence is DEAH. The short motif at 1036 to 1040 is the LXXLL motif 2 element; it reads LFSLL. Residues 1186-1337 enclose the Helicase C-terminal domain; that stretch reads LIDKLLPKMK…KAVLQSMSGR (152 aa). Residues 1461 to 1484 form a disordered region; the sequence is KDELAELSEAESEGDEKPKLRRPC. Residues 1465-1474 show a composition bias toward acidic residues; it reads AELSEAESEG. A phosphoserine mark is found at S1468 and S1472. The segment covering 1475–1484 has biased composition (basic and acidic residues); that stretch reads DEKPKLRRPC. Residues K1588, K1738, and K1903 each participate in a glycyl lysine isopeptide (Lys-Gly) (interchain with G-Cter in SUMO2) cross-link. S2026 carries the post-translational modification Phosphoserine. The short motif at 2031–2035 is the LXXLL motif 3 element; that stretch reads LPRLL. A Glycyl lysine isopeptide (Lys-Gly) (interchain with G-Cter in SUMO2) cross-link involves residue K2038. 2 disordered regions span residues 2050-2238 and 2305-2337; these read ENLK…QMNN and GAAT…SKVK. A phosphoserine mark is found at S2058 and S2059. K2074 is covalently cross-linked (Glycyl lysine isopeptide (Lys-Gly) (interchain with G-Cter in SUMO2)). 2 positions are modified to phosphoserine: S2075 and S2079. Over residues 2094–2104 the composition is skewed to basic and acidic residues; it reads SGGKCETDRRM. Low complexity predominate over residues 2141–2193; it reads SSCSSRSSSSSSSSSCSHSRSGSSSSSSSSCSSASSSSSSSTSSSSSSSSSSS. The segment covering 2203-2216 has biased composition (basic and acidic residues); the sequence is AQKRESTTHMKAYD. A compositionally biased stretch (polar residues) spans 2221-2238; the sequence is ASLSTTQDETQDSFQMNN. Positions 2332–2481 are binds A/T-rich DNA; the sequence is QMSKVKKHVR…LSYTQPQGIP (150 aa). Glycyl lysine isopeptide (Lys-Gly) (interchain with G-Cter in SUMO2) cross-links involve residues K2350, K2356, and K2361. The segment at 2429–2436 is a.T hook-like; sequence KKRRGRRK. Positions 2721–2725 match the LXXLL motif 4 motif; sequence LPNLL. Residues 2729 to 2777 form a disordered region; it reads GLLTKPTESGTEDKKGSDSKESEGKTERTESQSSENGGENSVSSSPSTS. Residues 2739-2758 show a composition bias toward basic and acidic residues; sequence TEDKKGSDSKESEGKTERTE. Over residues 2759-2777 the composition is skewed to low complexity; the sequence is SQSSENGGENSVSSSPSTS. Residues 2793–2797 carry the LXXLL motif 5 motif; it reads LNPLL. Residues 2827 to 2897 form a disordered region; that stretch reads VQNKNSDLGS…SEDSDSSNED (71 aa). The segment covering 2840–2857 has biased composition (basic and acidic residues); sequence VEVKEEDSRIKDQEDKGG. Residue K2843 forms a Glycyl lysine isopeptide (Lys-Gly) (interchain with G-Cter in SUMO2) linkage. Residues 2877 to 2888 show a composition bias toward low complexity; that stretch reads ASSGSDSTSSSS.

Belongs to the SNF2/RAD54 helicase family. Interacts with PPARA. Probably interacts with ESR1 and NR1I3. Phosphorylated on serine and tyrosine residues. As to expression, widely expressed at low levels. In bone marrow, expression is restricted to osteoprogenitor cells adjacent to mature osteoblasts.

The protein localises to the cytoplasm. It is found in the nucleus. It carries out the reaction ATP + H2O = ADP + phosphate + H(+). Functionally, probable ATP-dependent chromatin-remodeling factor. Acts as a transcriptional coactivator for PPARA and possibly other nuclear receptors. Has DNA-dependent ATPase activity and binds to A/T-rich DNA. Associates with A/T-rich regulatory regions in promoters of genes that participate in the differentiation of progenitors during osteogenesis. This is Chromodomain-helicase-DNA-binding protein 9 (CHD9) from Homo sapiens (Human).